The chain runs to 81 residues: MKTGIHPEYRPVVFVDTSTDFKFLSGSTKSSSETIKWEDGNEYPLLRVEISSDSHPFYTGKQKHATADGRVDRFNKKYGLK.

Belongs to the bacterial ribosomal protein bL31 family. Type B subfamily. Part of the 50S ribosomal subunit.

The protein is Large ribosomal subunit protein bL31B of Listeria innocua serovar 6a (strain ATCC BAA-680 / CLIP 11262).